Here is a 500-residue protein sequence, read N- to C-terminus: Probable cytosol aminopeptidase (500 aa).

Mn(2+)-binding residues include K268 and D273. K280 is an active-site residue. The Mn(2+) site is built by D291, D350, and E352. R354 is a catalytic residue.

This sequence belongs to the peptidase M17 family. Mn(2+) is required as a cofactor.

Its subcellular location is the cytoplasm. The catalysed reaction is Release of an N-terminal amino acid, Xaa-|-Yaa-, in which Xaa is preferably Leu, but may be other amino acids including Pro although not Arg or Lys, and Yaa may be Pro. Amino acid amides and methyl esters are also readily hydrolyzed, but rates on arylamides are exceedingly low.. It carries out the reaction Release of an N-terminal amino acid, preferentially leucine, but not glutamic or aspartic acids.. Presumably involved in the processing and regular turnover of intracellular proteins. Catalyzes the removal of unsubstituted N-terminal amino acids from various peptides. In Aromatoleum aromaticum (strain DSM 19018 / LMG 30748 / EbN1) (Azoarcus sp. (strain EbN1)), this protein is Probable cytosol aminopeptidase.